A 260-amino-acid chain; its full sequence is Nuclear receptor subfamily 0 group B member 2 (260 aa).

The region spanning 16-260 is the NR LBD domain; that stretch reads SHPTILYTLL…ELLEDMLLLR (245 aa). Arg57 is modified (symmetric dimethylarginine; by PRMT5).

This sequence belongs to the nuclear hormone receptor family. NR0 subfamily. As to quaternary structure, heterodimer; efficient DNA binding requires dimerization with another bHLH protein. Interacts (via N-terminus) with NEUROD1 (via N-terminus and C-terminus). Interacts with ID2. Interacts with NR1I3 and EID1. Interacts with RARA, RXRA, THRB, NR5A1, NR5A2, PPARA and PPARG. Interacts with RORG, NFIL3, NR1D1 and BHLHE41. Interacts with HNF4A; the resulting heterodimer is transcriptionally inactive. Interacts with DDX3X; this interaction disrupts the interaction between HNF4 and NR0B2/SHP that forms inactive heterodimers and enhances the formation of active HNF4 homodimers. Arginine methylation by PRMT5 enhances repression activity of metabolic genes in liver in response to bile acid signaling, by increasing interaction with cofactors. As to expression, detected in kidney, testis, heart and liver.

It is found in the cytoplasm. The protein localises to the nucleus. In terms of biological role, transcriptional regulator that acts as a negative regulator of receptor-dependent signaling pathways. Specifically inhibits transactivation of the nuclear receptor with which it interacts. Inhibits transcriptional activity of NEUROD1 on E-box-containing promoter by interfering with the coactivation function of the p300/CBP-mediated transcription complex for NEUROD1. Essential component of the liver circadian clock which via its interaction with NR1D1 and RORG regulates NPAS2-mediated hepatic lipid metabolism. Regulates the circadian expression of cytochrome P450 (CYP) enzymes. Represses: NR5A2 and HNF4A to down-regulate CYP2C38, NFLI3 to up-regulate CYP2A5, BHLHE41/HNF1A axis to up-regulate CYP1A2, CYP2E1 and CYP3A11, and NR1D1 to up-regulate CYP2B10, CYP4A10 and CYP4A14. This Rattus norvegicus (Rat) protein is Nuclear receptor subfamily 0 group B member 2 (Nr0b2).